A 20-amino-acid chain; its full sequence is TAANVKIFNTEEVQNFINLL.

Belongs to the intradiol ring-cleavage dioxygenase family. In terms of assembly, homodimer which dissociates into active monomeric subunits at high ionic strengths. It depends on Fe(3+) as a cofactor.

The catalysed reaction is catechol + O2 = cis,cis-muconate + 2 H(+). Its pathway is aromatic compound metabolism; beta-ketoadipate pathway; 5-oxo-4,5-dihydro-2-furylacetate from catechol: step 1/3. The polypeptide is Catechol 1,2-dioxygenase (Acinetobacter radioresistens).